A 504-amino-acid polypeptide reads, in one-letter code: MSFSVDVLANIAIELQRGIGHQDRFQRLITTLRQVLECDASALLRYDSRQFIPLAIDGLAKDVLGRRFALEGHPRLEAIARAGDVVRFPADSELPDPYDGLIPGQESLKVHACVGLPLFAGQNLIGALTLDGMQPDQFDVFSDEELRLIAALAAGALSNALLIEQLESQNMMPGDATPFEAVKQTQMIGLSPGMTQLKKEIEIVAASDLNVLISGETGTGKELVAKAIHEASPRAVNPLVYLNCAALPESVAESELFGHVKGAFTGAISNRSGKFEMADNGTLFLDEIGELSLALQAKLLRVLQYGDIQRVGDDRSLRVDVRVLAATNRDLREEVLAGRFRADLFHRLSVFPLSVPPLRERGDDVILLAGYFCEQCRLRLGLSRVVLSAGARNLLQHYRFPGNVRELEHAIHRAVVLSRATRNGDEVILEAQHFAFPEVTLPPPEAAAVPVVKQNLREATEAFQRETIRQALAQNHHNWAACARMLETDVANLHRLAKRLGMKD.

At Asp57 the chain carries 4-aspartylphosphate. Residues 187-416 enclose the Sigma-54 factor interaction domain; that stretch reads MIGLSPGMTQ…LEHAIHRAVV (230 aa). Residues 215–222 and 278–287 contribute to the ATP site; these read GETGTGKE and ADNGTLFLDE. The H-T-H motif DNA-binding region spans 479 to 498; the sequence is WAACARMLETDVANLHRLAK.

Its pathway is nitrogen metabolism; nitric oxide reduction. Required for the expression of anaerobic nitric oxide (NO) reductase, acts as a transcriptional activator for at least the norVW operon. Activation also requires sigma-54. This Escherichia coli (strain 55989 / EAEC) protein is Anaerobic nitric oxide reductase transcription regulator NorR.